The primary structure comprises 329 residues: Beta-tectorin (329 aa).

The first 17 residues, 1–17, serve as a signal peptide directing secretion; it reads MVTKAFVLLAIFAEASA. Residues 19 to 283 enclose the ZP domain; sequence SCAPNKADVI…LSCPVTCDKR (265 aa). N-linked (GlcNAc...) asparagine glycosylation is found at Asn80, Asn104, Asn116, and Asn145. Cys204 and Cys264 are oxidised to a cystine. A lipid anchor (GPI-anchor amidated glycine) is attached at Gly305. Residues 306–329 constitute a propeptide, removed in mature form; it reads FSSLYSFSDVLHHLIMMLGICAVL.

As to quaternary structure, may form homomeric filament after self-association or heteromeric filament after association with alpha-tectorin. Interacts with CEACAM16. Post-translationally, the presence of a hydrophobic C-terminus preceded by a potential cleavage site strongly suggests that tectorins are synthesized as glycosylphosphatidylinositol-linked, membrane-bound precursors. Tectorins are targeted to the apical surface of the inner ear epithelia by the lipid and proteolytically released into the extracellular compartment.

It localises to the cell membrane. It is found in the secreted. The protein resides in the extracellular space. The protein localises to the extracellular matrix. Its function is as follows. One of the major non-collagenous components of the tectorial membrane. The tectorial membrane is an extracellular matrix of the inner ear that covers the neuroepithelium of the cochlea and contacts the stereocilia bundles of specialized sensory hair cells. Sound induces movement of these hair cells relative to the tectorial membrane, deflects the stereocilia and leads to fluctuations in hair-cell membrane potential, transducing sound into electrical signals. In Homo sapiens (Human), this protein is Beta-tectorin (TECTB).